A 578-amino-acid polypeptide reads, in one-letter code: NADH-quinone oxidoreductase subunit C/D (578 aa).

Residues 1–167 form an NADH dehydrogenase I subunit C region; the sequence is MILSLFKLFG…DEFYFTKQKE (167 aa). The segment at 192 to 578 is NADH dehydrogenase I subunit D; the sequence is EYMFLNFGPN…IDFVMSDVDR (387 aa).

The protein in the N-terminal section; belongs to the complex I 30 kDa subunit family. In the C-terminal section; belongs to the complex I 49 kDa subunit family. As to quaternary structure, NDH-1 is composed of 13 different subunits. Subunits NuoB, CD, E, F, and G constitute the peripheral sector of the complex.

The protein resides in the cell inner membrane. It catalyses the reaction a quinone + NADH + 5 H(+)(in) = a quinol + NAD(+) + 4 H(+)(out). Its function is as follows. NDH-1 shuttles electrons from NADH, via FMN and iron-sulfur (Fe-S) centers, to quinones in the respiratory chain. The immediate electron acceptor for the enzyme in this species is believed to be ubiquinone. Couples the redox reaction to proton translocation (for every two electrons transferred, four hydrogen ions are translocated across the cytoplasmic membrane), and thus conserves the redox energy in a proton gradient. The sequence is that of NADH-quinone oxidoreductase subunit C/D from Buchnera aphidicola subsp. Cinara cedri (strain Cc).